A 291-amino-acid chain; its full sequence is Pantothenate synthetase (291 aa).

30–37 (MGYLHVGH) is a binding site for ATP. The active-site Proton donor is the His-37. Residue Gln-61 coordinates (R)-pantoate. A beta-alanine-binding site is contributed by Gln-61. 147 to 150 (GEKD) is an ATP binding site. Gln-153 provides a ligand contact to (R)-pantoate. ATP is bound by residues Val-176 and 184–187 (CSSR).

Belongs to the pantothenate synthetase family. In terms of assembly, homodimer.

The protein localises to the cytoplasm. The enzyme catalyses (R)-pantoate + beta-alanine + ATP = (R)-pantothenate + AMP + diphosphate + H(+). It functions in the pathway cofactor biosynthesis; (R)-pantothenate biosynthesis; (R)-pantothenate from (R)-pantoate and beta-alanine: step 1/1. In terms of biological role, catalyzes the condensation of pantoate with beta-alanine in an ATP-dependent reaction via a pantoyl-adenylate intermediate. The chain is Pantothenate synthetase from Sinorhizobium medicae (strain WSM419) (Ensifer medicae).